We begin with the raw amino-acid sequence, 156 residues long: Large ribosomal subunit protein uL22 (156 aa).

The protein belongs to the universal ribosomal protein uL22 family. In terms of assembly, part of the 50S ribosomal subunit.

In terms of biological role, this protein binds specifically to 23S rRNA. It makes multiple contacts with different domains of the 23S rRNA in the assembled 50S subunit and ribosome. Functionally, the globular domain of the protein is located near the polypeptide exit tunnel on the outside of the subunit, while an extended beta-hairpin is found that lines the wall of the exit tunnel in the center of the 70S ribosome. The sequence is that of Large ribosomal subunit protein uL22 from Sulfurisphaera tokodaii (strain DSM 16993 / JCM 10545 / NBRC 100140 / 7) (Sulfolobus tokodaii).